Reading from the N-terminus, the 36-residue chain is Conotoxin Bu21 (36 aa).

Positions 1–21 (DGANAEATDNKPGVFERDEKK) are excised as a propeptide. 2 disulfides stabilise this stretch: C22-C28 and C23-C34.

Belongs to the conotoxin A superfamily. In terms of tissue distribution, expressed by the venom duct.

It localises to the secreted. This is Conotoxin Bu21 from Conus bullatus (Bubble cone).